Reading from the N-terminus, the 744-residue chain is Leucine-rich repeat extensin-like protein 1 (744 aa).

Positions 1–26 are cleaved as a signal peptide; that stretch reads MLFPPLRSLFLFTLLLSSVCFLQIKA. Residues Asn71 and Asn77 are each glycosylated (N-linked (GlcNAc...) asparagine). LRR repeat units lie at residues 122 to 145, 147 to 170, 171 to 194, 196 to 217, 219 to 240, 241 to 265, 266 to 289, 290 to 313, and 315 to 336; these read LSDLALFHINSNRFCGEVPLTFNR, KLLYELDLSNNRFVGKFPKVVLSL, PSLKFLDLRYNEFEGKIPSKLFDR, LDAIFLNHNRFRFGIPKNMGNS, VSALVLADNNLGGCIPGSIGQM, GKTLNELILSNDNLTGCLPPQIGNL, KKVTVFDITSNRLQGPLPSSVGNM, KSLEELHVANNAFTGVIPPSICQL, and NLENFTYSSNYFSGRPPICAAS. N-linked (GlcNAc...) asparagine glycosylation is present at Asn253. N-linked (GlcNAc...) asparagine glycosylation is found at Asn318 and Asn344. The stretch at 381 to 404 is one LRR 10 repeat; the sequence is FSPPPPTFKMSPEVRTLPPPIYVY. The tract at residues 382 to 744 is contains the Ser-Pro(4) repeats; that stretch reads SPPPPTFKMS…ASPPPPPSYY (363 aa). 4 disordered regions span residues 408–445, 518–537, 555–576, and 658–744; these read PPPPSSKMSPTVRAYSPPPPPSSKMSPSVRAYSPPPPP, VYSSPPPPPPSPPPPCPESS, PSPVYYPPVTQSPPPPSPVYYP, and PPPS…PSYY. Over residues 430–439 the composition is skewed to low complexity; it reads SKMSPSVRAY. The span at 704 to 729 shows a compositional bias: pro residues; that stretch reads YEPPPEYSYSSSPPPPSPTSYFPPMP.

In terms of processing, hydroxylated on proline residues in the S-P-P-P-P repeat. Post-translationally, O-glycosylated on hydroxyprolines. Expressed in root hair cells (at protein level).

It is found in the secreted. The protein resides in the cell wall. Its function is as follows. Modulates cell morphogenesis by regulating cell wall formation and assembly, and/or growth polarization. Together with LRX2, component of the extracellular mechanism regulating root hair morphogenesis and elongation. This chain is Leucine-rich repeat extensin-like protein 1 (LRX1), found in Arabidopsis thaliana (Mouse-ear cress).